We begin with the raw amino-acid sequence, 923 residues long: Neuropilin-1 (923 aa).

Residues 1–21 (MERGLPLLCAVLALVLAPAGA) form the signal peptide. At 22–856 (FRNDKCGDTI…PGNVLKTLDP (835 aa)) the chain is on the extracellular side. Disulfide bonds link cysteine 27/cysteine 54, cysteine 82/cysteine 104, and cysteine 147/cysteine 173. CUB domains are found at residues 27-141 (CGDT…YEIF) and 147-265 (CSQN…YSVL). N-linked (GlcNAc...) asparagine glycosylation is present at asparagine 150. Glutamate 195, aspartate 209, and aspartate 250 together coordinate Ca(2+). Residues cysteine 206 and cysteine 228 are joined by a disulfide bond. 3 N-linked (GlcNAc...) asparagine glycosylation sites follow: asparagine 261, asparagine 300, and asparagine 522. 2 disulfides stabilise this stretch: cysteine 275-cysteine 424 and cysteine 431-cysteine 583. F5/8 type C domains are found at residues 275 to 424 (CMEA…VYGC) and 431 to 583 (CSGM…LLGC). O-linked (Xyl...) (chondroitin sulfate) serine; alternate glycosylation occurs at serine 612. The O-linked (Xyl...) (heparan sulfate) serine; alternate glycan is linked to serine 612. An MAM domain is found at 645–811 (TYGFNCEFGW…NHISQEDCAK (167 aa)). A disordered region spans residues 820-845 (PEIKIDETGSTPGYEGEGEGDKNISR). A glycan (O-linked (Xyl...) (chondroitin sulfate) serine) is linked at serine 829. Residue asparagine 842 is glycosylated (N-linked (GlcNAc...) asparagine). A helical transmembrane segment spans residues 857-879 (ILITIIAMSALGVLLGAVCGVVL). Residues 880-923 (YCACWHNGMSERNLSALENYNFELVDGVKLKKDKLNTQSTYSEA) are Cytoplasmic-facing. Serine 894 carries the phosphoserine modification.

The protein belongs to the neuropilin family. As to quaternary structure, homodimer, and heterodimer with NRP2. Interacts with FER. Interacts with PLXNB1. Interacts with VEGFA. Interacts with ABCB8/MITOSUR in mitochondria. (Microbial infection) Interacts with SARS coronavirus-2/SARS-CoV-2 spike protein S1 (via the CendR motif RRAR). As to expression, the expression of isoforms 1 and 2 does not seem to overlap. Expressed in olfactory epithelium (at protein level). Expressed in fibroblasts (at protein level). Expressed by the blood vessels of different tissues. In the developing embryo it is found predominantly in the nervous system. In adult tissues, it is highly expressed in heart and placenta; moderately in lung, liver, skeletal muscle, kidney and pancreas; and low in adult brain. Expressed in the central nervous system, including olfactory related regions such as the olfactory tubercles and paraolfactory gyri. The expression of isoforms 1 and 2 does not seem to overlap. Found in liver hepatocytes, kidney distal and proximal tubules.

The protein resides in the secreted. It localises to the mitochondrion membrane. Its subcellular location is the cell membrane. The protein localises to the cytoplasm. Its function is as follows. Cell-surface receptor involved in the development of the cardiovascular system, in angiogenesis, in the formation of certain neuronal circuits and in organogenesis outside the nervous system. Mediates the chemorepulsant activity of semaphorins. Recognizes a C-end rule (CendR) motif R/KXXR/K on its ligands which causes cellular internalization and vascular leakage. It binds to semaphorin 3A, the PLGF-2 isoform of PGF, the VEGF165 isoform of VEGFA and VEGFB. Coexpression with KDR results in increased VEGF165 binding to KDR as well as increased chemotaxis. Regulates VEGF-induced angiogenesis. Binding to VEGFA initiates a signaling pathway needed for motor neuron axon guidance and cell body migration, including for the caudal migration of facial motor neurons from rhombomere 4 to rhombomere 6 during embryonic development. Regulates mitochondrial iron transport via interaction with ABCB8/MITOSUR. Functionally, (Microbial infection) Acts as a host factor for human coronavirus SARS-CoV-2 infection. Recognizes and binds to CendR motif RRAR on SARS-CoV-2 spike protein S1 which enhances SARS-CoV-2 infection. Binds VEGF-165 and may inhibit its binding to cells. May induce apoptosis by sequestering VEGF-165. May bind as well various members of the semaphorin family. Its expression has an averse effect on blood vessel number and integrity. The polypeptide is Neuropilin-1 (Homo sapiens (Human)).